A 180-amino-acid chain; its full sequence is MATNLKDIADQYAKAIFELSSEQGNVEDTRKDLDTLKVVFENNPNFVTIVSSNDINSEARDGLLTTLTTGASEAIQNLVKLLAYNNRLNLLTQIVTSFEDYYNDAHGIVNVVATTAVALDETRLDKLAAVFASKTGAKHVNLTNNVDESIIGGVILQSQSTLIDGSLQTKIAKMKAQLLG.

This sequence belongs to the ATPase delta chain family. In terms of assembly, F-type ATPases have 2 components, F(1) - the catalytic core - and F(0) - the membrane proton channel. F(1) has five subunits: alpha(3), beta(3), gamma(1), delta(1), epsilon(1). F(0) has three main subunits: a(1), b(2) and c(10-14). The alpha and beta chains form an alternating ring which encloses part of the gamma chain. F(1) is attached to F(0) by a central stalk formed by the gamma and epsilon chains, while a peripheral stalk is formed by the delta and b chains.

Its subcellular location is the cell membrane. Its function is as follows. F(1)F(0) ATP synthase produces ATP from ADP in the presence of a proton or sodium gradient. F-type ATPases consist of two structural domains, F(1) containing the extramembraneous catalytic core and F(0) containing the membrane proton channel, linked together by a central stalk and a peripheral stalk. During catalysis, ATP synthesis in the catalytic domain of F(1) is coupled via a rotary mechanism of the central stalk subunits to proton translocation. Functionally, this protein is part of the stalk that links CF(0) to CF(1). It either transmits conformational changes from CF(0) to CF(1) or is implicated in proton conduction. The protein is ATP synthase subunit delta of Leuconostoc citreum (strain KM20).